The chain runs to 342 residues: 3-isopropylmalate dehydrogenase (342 aa).

Residues Arg87, Arg97, Arg121, and Asp212 each contribute to the substrate site. Mg(2+) contacts are provided by Asp212, Asp236, and Asp240. 272 to 284 (GSAPDIAGRQLAD) serves as a coordination point for NAD(+). Over residues 319 to 328 (RAAAGAAQPS) the composition is skewed to low complexity. Residues 319–342 (RAAAGAAQPSTRERGEDLAARAAG) form a disordered region. Basic and acidic residues predominate over residues 329-342 (TRERGEDLAARAAG).

It belongs to the isocitrate and isopropylmalate dehydrogenases family. LeuB type 2 subfamily. As to quaternary structure, homodimer. Requires Mg(2+) as cofactor. Mn(2+) serves as cofactor.

The protein resides in the cytoplasm. It catalyses the reaction (2R,3S)-3-isopropylmalate + NAD(+) = 4-methyl-2-oxopentanoate + CO2 + NADH. The protein operates within amino-acid biosynthesis; L-leucine biosynthesis; L-leucine from 3-methyl-2-oxobutanoate: step 3/4. Its function is as follows. Catalyzes the oxidation of 3-carboxy-2-hydroxy-4-methylpentanoate (3-isopropylmalate) to 3-carboxy-4-methyl-2-oxopentanoate. The product decarboxylates to 4-methyl-2 oxopentanoate. This Frankia casuarinae (strain DSM 45818 / CECT 9043 / HFP020203 / CcI3) protein is 3-isopropylmalate dehydrogenase.